The primary structure comprises 326 residues: Glyceraldehyde-3-phosphate dehydrogenase, cytosolic (326 aa).

NAD(+) is bound by residues 2–3 (RI), D24, and R71. D-glyceraldehyde 3-phosphate contacts are provided by residues 142–144 (SCT), T173, 202–203 (TG), and R225. C143 functions as the Nucleophile in the catalytic mechanism. Residue N307 coordinates NAD(+).

The protein belongs to the glyceraldehyde-3-phosphate dehydrogenase family.

It localises to the cytoplasm. It catalyses the reaction D-glyceraldehyde 3-phosphate + phosphate + NAD(+) = (2R)-3-phospho-glyceroyl phosphate + NADH + H(+). It participates in carbohydrate degradation; glycolysis; pyruvate from D-glyceraldehyde 3-phosphate: step 1/5. Its function is as follows. Key enzyme in glycolysis that catalyzes the first step of the pathway by converting D-glyceraldehyde 3-phosphate (G3P) into 3-phospho-D-glyceroyl phosphate. Essential for the maintenance of cellular ATP levels and carbohydrate metabolism. In Nicotiana tabacum (Common tobacco), this protein is Glyceraldehyde-3-phosphate dehydrogenase, cytosolic (GAPC).